A 396-amino-acid chain; its full sequence is DNA-directed RNA polymerase subunit 6 (396 aa).

2 disordered regions span residues 1–137 (MSSK…DIED) and 290–396 (NQQK…DYSE). Acidic residues-rich tracts occupy residues 21-53 (EYYDDDAEFQNSEDEYPPSDEDLDNSGGSDDEN), 76-88 (IDPDDEAEYDTDG), and 97-137 (EMGE…DIED). Residues 290 to 312 (NQQKNSTTDTETLSTQENASTRV) show a composition bias toward polar residues. Composition is skewed to low complexity over residues 313–338 (SGSNLRSRSGSKSSKSNNSRSASKSN) and 346–366 (NSRTGSKSNSRTGSKSNSRTG). Positions 367–380 (SKSKKSSNTKSKSK) are enriched in basic residues. Residues 385 to 396 (NSDDSDYSDYSE) are compositionally biased toward acidic residues.

The protein belongs to the archaeal Rpo6/eukaryotic RPB6 RNA polymerase subunit family.

It catalyses the reaction RNA(n) + a ribonucleoside 5'-triphosphate = RNA(n+1) + diphosphate. Functionally, DNA-dependent RNA polymerase catalyzes the transcription of DNA into RNA using the four ribonucleoside triphosphates as substrates. The sequence is that of DNA-directed RNA polymerase subunit 6 from Acanthamoeba polyphaga (Amoeba).